Here is a 621-residue protein sequence, read N- to C-terminus: MAU2 chromatid cohesion factor homolog (621 aa).

3 TPR repeats span residues 96–129, 451–484, and 491–524; these read FDTASLLAQLHLQTEQSSHAKAMLRRAVELSQNN, GGFYYVQGLHAFHKNSFHEAKRFLRETLKMANAE, and SCSLVLLSHVFLSIGNSKESMNMVTPAMQLASKI.

The protein belongs to the SCC4/mau-2 family. In terms of assembly, interacts with Nipped-B to form the cohesin loading complex.

The protein localises to the nucleus. Its subcellular location is the nucleoplasm. Its function is as follows. Required for association of the cohesin complex with chromatin during interphase. Plays a role in sister chromatid cohesion and normal progression through prometaphase. This Drosophila virilis (Fruit fly) protein is MAU2 chromatid cohesion factor homolog.